Reading from the N-terminus, the 143-residue chain is Sirohydrochlorin cobaltochelatase (143 aa).

His18 (proton acceptor) is an active-site residue. His18 lines the Co(2+) pocket. His18 is a binding site for Ni(2+). Substrate contacts are provided by residues Arg53 and 78 to 83 (LAHGVH). His83 is a binding site for Co(2+). His83 is a binding site for Ni(2+).

Belongs to the CbiX family. CbiXS subfamily. In terms of assembly, homotetramer; dimer of dimers.

The enzyme catalyses Co-sirohydrochlorin + 2 H(+) = sirohydrochlorin + Co(2+). The catalysed reaction is Ni-sirohydrochlorin + 2 H(+) = sirohydrochlorin + Ni(2+). Its pathway is cofactor biosynthesis; adenosylcobalamin biosynthesis; cob(II)yrinate a,c-diamide from sirohydrochlorin (anaerobic route): step 1/10. Catalyzes the insertion of Co(2+) into sirohydrochlorin as part of the anaerobic pathway to cobalamin biosynthesis. Involved in the biosynthesis of the unique nickel-containing tetrapyrrole coenzyme F430, the prosthetic group of methyl-coenzyme M reductase (MCR), which plays a key role in methanogenesis and anaerobic methane oxidation (Potential). Catalyzes the insertion of Ni(2+) into sirohydrochlorin to yield Ni-sirohydrochlorin (Potential). This Methanothermobacter thermautotrophicus (strain ATCC 29096 / DSM 1053 / JCM 10044 / NBRC 100330 / Delta H) (Methanobacterium thermoautotrophicum) protein is Sirohydrochlorin cobaltochelatase.